The sequence spans 151 residues: Group 10 secretory phospholipase A2 (151 aa).

The first 17 residues, 1-17, serve as a signal peptide directing secretion; that stretch reads MLLLLLLLLLGPGSCLS. Residues 18-28 constitute a propeptide that is removed on maturation; the sequence is EATRRSHVYKR. Intrachain disulfides connect cysteine 39/cysteine 97, cysteine 53/cysteine 143, cysteine 55/cysteine 71, cysteine 70/cysteine 125, cysteine 76/cysteine 150, cysteine 77/cysteine 118, cysteine 86/cysteine 111, and cysteine 104/cysteine 116. Residues tyrosine 54, glycine 56, and glycine 58 each contribute to the Ca(2+) site. Histidine 74 is an active-site residue. Aspartate 75 contributes to the Ca(2+) binding site. Residue aspartate 119 is part of the active site.

This sequence belongs to the phospholipase A2 family. In terms of assembly, interacts with PLA2R1; this interaction mediates PLA2G10 clearance and inactivation. Ca(2+) serves as cofactor.

It is found in the secreted. Its subcellular location is the lysosome. It localises to the cytoplasmic vesicle. The protein localises to the secretory vesicle. The protein resides in the acrosome. The enzyme catalyses a 1,2-diacyl-sn-glycero-3-phosphocholine + H2O = a 1-acyl-sn-glycero-3-phosphocholine + a fatty acid + H(+). It catalyses the reaction 1-hexadecanoyl-2-(9Z-octadecenoyl)-sn-glycero-3-phosphocholine + H2O = 1-hexadecanoyl-sn-glycero-3-phosphocholine + (9Z)-octadecenoate + H(+). The catalysed reaction is 1-octadecanoyl-2-(5Z,8Z,11Z,14Z-eicosatetraenoyl)-sn-glycero-3-phosphocholine + H2O = 1-octadecanoyl-sn-glycero-3-phosphocholine + (5Z,8Z,11Z,14Z)-eicosatetraenoate + H(+). It carries out the reaction 1,2-dihexadecanoyl-sn-glycero-3-phosphocholine + H2O = 1-hexadecanoyl-sn-glycero-3-phosphocholine + hexadecanoate + H(+). The enzyme catalyses 1-hexadecanoyl-2-(9Z-octadecenoyl)-sn-glycero-3-phosphoglycerol + H2O = 1-hexadecanoyl-sn-glycero-3-phosphoglycerol + (9Z)-octadecenoate + H(+). It catalyses the reaction 1,2-dihexadecanoyl-sn-glycero-3-phospho-(1'-sn-glycerol) + H2O = 1-hexadecanoyl-sn-glycero-3-phospho-(1'-sn-glycerol) + hexadecanoate + H(+). The catalysed reaction is 1-hexadecanoyl-2-(9Z-octadecenoyl)-sn-glycero-3-phospho-L-serine + H2O = 1-hexadecanoyl-sn-glycero-3-phospho-L-serine + (9Z)-octadecenoate + H(+). It carries out the reaction 1-hexadecanoyl-2-(9Z,12Z-octadecadienoyl)-sn-glycero-3-phosphoethanolamine + H2O = 1-hexadecanoyl-sn-glycero-3-phosphoethanolamine + (9Z,12Z)-octadecadienoate + H(+). The enzyme catalyses 1-hexadecanoyl-2-(9Z-octadecenoyl)-sn-glycero-3-phosphate + H2O = 1-hexadecanoyl-sn-glycero-3-phosphate + (9Z)-octadecenoate + H(+). It catalyses the reaction 1-O-hexadecyl-2-acetyl-sn-glycero-3-phosphocholine + H2O = 1-O-hexadecyl-sn-glycero-3-phosphocholine + acetate + H(+). Functionally, secretory calcium-dependent phospholipase A2 that primarily targets extracellular phospholipids. Hydrolyzes the ester bond of the fatty acyl group attached at sn-2 position of phospholipids with preference for phosphatidylcholines and phosphatidylglycerols over phosphatidylethanolamines. Preferentially releases sn-2 omega-6 and omega-3 polyunsaturated fatty acyl (PUFA) chains over saturated fatty acyls. Contributes to phospholipid remodeling of very low-density lipoprotein (VLDL), low-density lipoprotein (LDL) and high-density lipoprotein (HDL) particles. Hydrolyzes LDL phospholipids releasing unsaturated fatty acids that regulate macrophage differentiation toward foam cells. Efficiently hydrolyzes and inactivates platelet activating factor (PAF), a potent lipid mediator present in oxidized LDL. May act in an autocrine and paracrine manner. Secreted by lung epithelium, targets membrane phospholipids of infiltrating eosinophils, releasing arachidonate and boosting eicosanoid and cysteinyl leukotriene synthesis involved in airway inflammatory response. Secreted by gut epithelium, hydrolyzes dietary and biliary phosphatidylcholines in the gastrointestinal lumen. Plays a stem cell regulator role in colon epithelium. Within intracellular compartment, mediates Paneth-like cell differentiation and its stem cell supporting functions by inhibiting the Wnt signaling pathway in intestinal stem cell (ISC). Secreted in the intestinal lumen upon inflammation, acts in an autocrine way and promotes prostaglandin E2 synthesis that stimulates Wnt signaling pathway in ISCs and tissue regeneration. May participate in hair follicle morphogenesis by regulating phosphatidylethanolamines metabolism at the outermost epithelial layer and facilitating melanin synthesis. By releasing lysophosphatidylcholines (LPCs) at sperm acrosome, controls sperm cell capacitation, acrosome reaction and overall fertility. May promote neurite outgrowth in neuron fibers involved in nociception. Contributes to lipid remodeling of cellular membranes and generation of lipid mediators involved in pathogen clearance. Cleaves sn-2 fatty acyl chains of phosphatidylglycerols and phosphatidylethanolamines, which are major components of membrane phospholipids in bacteria. Displays bactericidal activity against Gram-positive bacteria by directly hydrolyzing phospholipids of the bacterial membrane. In pulmonary epithelium, may contribute to host defense response against adenoviral infection. Prevents adenovirus entry into host cells by hydrolyzing host cell plasma membrane, releasing C16:0 LPCs that inhibit virus-mediated membrane fusion and viral infection. Likely prevents adenoviral entry into the endosomes of host cells. May play a role in maturation and activation of innate immune cells including macrophages, group 2 innate lymphoid cells and mast cells. The chain is Group 10 secretory phospholipase A2 (Pla2g10) from Rattus norvegicus (Rat).